A 159-amino-acid chain; its full sequence is Ribosomal RNA large subunit methyltransferase H (159 aa).

S-adenosyl-L-methionine contacts are provided by residues Leu-76, Gly-108, and 127 to 132 (FSKMTF).

It belongs to the RNA methyltransferase RlmH family. As to quaternary structure, homodimer.

The protein resides in the cytoplasm. The catalysed reaction is pseudouridine(1915) in 23S rRNA + S-adenosyl-L-methionine = N(3)-methylpseudouridine(1915) in 23S rRNA + S-adenosyl-L-homocysteine + H(+). In terms of biological role, specifically methylates the pseudouridine at position 1915 (m3Psi1915) in 23S rRNA. The chain is Ribosomal RNA large subunit methyltransferase H from Staphylococcus aureus (strain MSSA476).